Reading from the N-terminus, the 164-residue chain is UPF0114 protein YqhA (164 aa).

The next 3 membrane-spanning stretches (helical) occupy residues 15–35, 53–73, and 136–156; these read LLAPVYFGLSLALVALALKFF, LILVLLSLVDMTLVGGLLVMV, and LMWYVIIHLTFVLSAFVMGYL.

It belongs to the UPF0114 family.

The protein resides in the cell membrane. The chain is UPF0114 protein YqhA from Escherichia coli O139:H28 (strain E24377A / ETEC).